The primary structure comprises 57 residues: UPF0434 protein Spea_1772 (57 aa).

Belongs to the UPF0434 family.

This chain is UPF0434 protein Spea_1772, found in Shewanella pealeana (strain ATCC 700345 / ANG-SQ1).